The following is a 253-amino-acid chain: ATP synthase subunit a (253 aa).

Transmembrane regions (helical) follow at residues 30–50, 88–108, 118–138, 144–164, 184–204, and 211–231; these read FTNA…VLLA, FFPF…IGLV, IAVT…YGLI, FLGI…MIMI, MLAG…LLGA, and VAPL…LVAF.

Belongs to the ATPase A chain family. F-type ATPases have 2 components, CF(1) - the catalytic core - and CF(0) - the membrane proton channel. CF(1) has five subunits: alpha(3), beta(3), gamma(1), delta(1), epsilon(1). CF(0) has three main subunits: a(1), b(2) and c(9-12). The alpha and beta chains form an alternating ring which encloses part of the gamma chain. CF(1) is attached to CF(0) by a central stalk formed by the gamma and epsilon chains, while a peripheral stalk is formed by the delta and b chains.

Its subcellular location is the cell inner membrane. Its function is as follows. Key component of the proton channel; it plays a direct role in the translocation of protons across the membrane. The polypeptide is ATP synthase subunit a (Beijerinckia indica subsp. indica (strain ATCC 9039 / DSM 1715 / NCIMB 8712)).